An 860-amino-acid chain; its full sequence is Transcription factor E2F8 (860 aa).

Residues 1 to 114 (MENQKENLFS…NEKSQPSRKE (114 aa)) form a disordered region. Position 71 is a phosphoserine (S71). Composition is skewed to basic and acidic residues over residues 74–84 (IRSRDQKRGLS) and 92–114 (EARD…SRKE). 2 consecutive DNA-binding regions follow at residues 112–181 (RKEK…TWHG) and 261–347 (RKDK…KWTG). Disordered regions lie at residues 407 to 433 (RRKI…PPVP) and 533 to 616 (TPPH…PKED). Residues 411-426 (SSAPSSPVKSSKAESS) are compositionally biased toward low complexity. Phosphoserine is present on residues S412 and S416. The span at 542–554 (VCPTQSSNATGSK) shows a compositional bias: polar residues. 2 stretches are compositionally biased toward basic and acidic residues: residues 555 to 565 (DPTDAPTEKTA) and 586 to 596 (RSKETTGDRGT).

This sequence belongs to the E2F/DP family. Homodimer and heterodimer: mainly forms homodimers and, to a lesser extent, heterodimers with E2F8. Dimerization is important for DNA-binding. Interacts with HIF1A.

The protein resides in the nucleus. Functionally, atypical E2F transcription factor that participates in various processes such as angiogenesis and polyploidization of specialized cells. Mainly acts as a transcription repressor that binds DNA independently of DP proteins and specifically recognizes the E2 recognition site 5'-TTTC[CG]CGC-3'. Directly represses transcription of classical E2F transcription factors such as E2F1: component of a feedback loop in S phase by repressing the expression of E2F1, thereby preventing p53/TP53-dependent apoptosis. Plays a key role in polyploidization of cells in placenta and liver by regulating the endocycle, probably by repressing genes promoting cytokinesis and antagonizing action of classical E2F proteins (E2F1, E2F2 and/or E2F3). Required for placental development by promoting polyploidization of trophoblast giant cells. Acts as a promoter of sprouting angiogenesis, possibly by acting as a transcription activator: associates with HIF1A, recognizes and binds the VEGFA promoter, which is different from canonical E2 recognition site, and activates expression of the VEGFA gene. The sequence is that of Transcription factor E2F8 (E2f8) from Rattus norvegicus (Rat).